The following is a 337-amino-acid chain: tRNA-dihydrouridine synthase B (337 aa).

FMN contacts are provided by residues 19 to 21 (PMA) and Gln73. Cys103 acts as the Proton donor in catalysis. Residues Lys142, 203–205 (NGD), and 227–228 (GR) each bind FMN.

This sequence belongs to the Dus family. DusB subfamily. The cofactor is FMN.

It catalyses the reaction a 5,6-dihydrouridine in tRNA + NAD(+) = a uridine in tRNA + NADH + H(+). The catalysed reaction is a 5,6-dihydrouridine in tRNA + NADP(+) = a uridine in tRNA + NADPH + H(+). Functionally, catalyzes the synthesis of 5,6-dihydrouridine (D), a modified base found in the D-loop of most tRNAs, via the reduction of the C5-C6 double bond in target uridines. This Pseudomonas putida (strain ATCC 47054 / DSM 6125 / CFBP 8728 / NCIMB 11950 / KT2440) protein is tRNA-dihydrouridine synthase B.